A 249-amino-acid chain; its full sequence is Esterase YjfP (249 aa).

Its function is as follows. Displays esterase activity toward palmitoyl-CoA and pNP-butyrate. The protein is Esterase YjfP (yjfP) of Escherichia coli (strain K12).